A 410-amino-acid polypeptide reads, in one-letter code: Chlorobenzene dioxygenase, ferredoxin reductase component (410 aa).

4–35 contributes to the FAD binding site; the sequence is HVAIIGNGVAGFTTAQALRAEGFEGRISLIGN. 145 to 173 contacts NAD(+); that stretch reads RLVIAGGGLIGCEVATTARKLGLAVTILE.

It belongs to the bacterial ring-hydroxylating dioxygenase ferredoxin reductase family. This dioxygenase system consists of four proteins: the two subunits of the oxygenase component (TecA1 and TecA2), a ferredoxin (TecA3) and a ferredoxin reductase (TecA4). Requires FAD as cofactor.

The enzyme catalyses 2 reduced [2Fe-2S]-[ferredoxin] + NAD(+) + H(+) = 2 oxidized [2Fe-2S]-[ferredoxin] + NADH. Its pathway is aromatic compound metabolism. In terms of biological role, part of the chlorobenzene dioxygenase system that catalyzes the dihydroxylation of a range of aromatic compounds, including chlorinated benzenes and toluenes, and dinuclear aromatics such as biphenyl and dibenzo-p-dioxin. This is Chlorobenzene dioxygenase, ferredoxin reductase component from Cupriavidus sp. (strain PS12).